A 492-amino-acid chain; its full sequence is Cytoplasmic dynein 1 light intermediate chain 2 (492 aa).

61-68 (GEDGSGKT) serves as a coordination point for ATP. Disordered stretches follow at residues 188–207 (EEGC…GSDE), 370–423 (LAKQ…KNNA), and 437–492 (LSKK…ENEA). Ser194, Ser383, and Ser391 each carry phosphoserine. Residues 370–383 (LAKQPATPTRTSES) are compositionally biased toward polar residues. Omega-N-methylarginine is present on Arg397. A compositionally biased stretch (polar residues) spans 437–469 (LSKKTGSPGSPSAGGVQSTAKKSGQKTVLSNVQ). At Thr441 the chain carries Phosphothreonine. 2 positions are modified to phosphoserine: Ser443 and Ser446. Basic and acidic residues predominate over residues 471–480 (ELDRMTRKPD). Residues 482 to 492 (MVTNSSTENEA) are compositionally biased toward polar residues.

Belongs to the dynein light intermediate chain family. Homodimer. The cytoplasmic dynein 1 complex consists of two catalytic heavy chains (HCs) and a number of non-catalytic subunits presented by intermediate chains (ICs), light intermediate chains (LICs) and light chains (LCs); the composition seems to vary in respect to the IC, LIC and LC composition. The heavy chain homodimer serves as a scaffold for the probable homodimeric assembly of the respective non-catalytic subunits. The ICs and LICs bind directly to the HC dimer and the LCs assemble on the IC dimer. Interacts with DYNC1H1; DYNC1LI1 and DYNC1LI2 bind mutually exclusive to DYNC1H.

It localises to the cytoplasm. Its subcellular location is the cytoskeleton. Functionally, acts as one of several non-catalytic accessory components of the cytoplasmic dynein 1 complex that are thought to be involved in linking dynein to cargos and to adapter proteins that regulate dynein function. Cytoplasmic dynein 1 acts as a motor for the intracellular retrograde motility of vesicles and organelles along microtubules. May play a role in binding dynein to membranous organelles or chromosomes. The chain is Cytoplasmic dynein 1 light intermediate chain 2 (Dync1li2) from Mus musculus (Mouse).